A 130-amino-acid chain; its full sequence is UPF0102 protein TDE_2303 (130 aa).

This sequence belongs to the UPF0102 family.

This is UPF0102 protein TDE_2303 from Treponema denticola (strain ATCC 35405 / DSM 14222 / CIP 103919 / JCM 8153 / KCTC 15104).